Here is a 588-residue protein sequence, read N- to C-terminus: MDTSTSAYAPLPGEDPLFSGHPPASLRRSWKGFAVIFASVLFLLSLVGLIIHQGPQQPPDVMPDKQDEHHHPQSTTPASETTASWEPRGKALGVSAKSNPPVSDELSYNWTNAMFSWQRTAFHFQPERNWMNDPNGPLFYKGWYHLFYQYNPDSAIWGNITWGHAVSTDLIHWLYLPIAMVADQWYDANGVWSGSATLLPDGQIVMLYTGDTVDAVQVVCLAHPANLSDPLLLDWVKYSGNPVLTPPPGILTTDFRDPTTAWTGPDGKWRITIGSKVNTTGISFVYHTEDFKTYNMSKGVLHAVPGTGMWECIDFYPVAINGSKGVETSVNNPSVKHVLKASLDNTKVDHYALGTYFEENETWVPDNPGLDVGIGLRYDYGRYYASKTFYDQNKERRILRGWINETDTESDDLAKGWASVQTIPRTVLFDNKTGTNLIQWPVEEIEELRLNNTDFSDVLVEAGTVVELDIGTATQLDILVEFELEPLESSETVNSSVGCGGGAVDRGTFGPFGILVIADETLTELTPIYFNLANSTEGDVITYFCADERRSSKAPDVFKQVYGSEVPVLDGEKHFARVLRALRKEVGR.

The Cytoplasmic portion of the chain corresponds to 1–31 (MDTSTSAYAPLPGEDPLFSGHPPASLRRSWK). A propeptide spans 1 to 115 (MDTSTSAYAP…LSYNWTNAMF (115 aa)) (removed in mature form). The chain crosses the membrane as a helical; Signal-anchor for type II membrane protein span at residues 32–52 (GFAVIFASVLFLLSLVGLIIH). Topologically, residues 53-588 (QGPQQPPDVM…LRALRKEVGR (536 aa)) are lumenal. Residues 57-86 (QPPDVMPDKQDEHHHPQSTTPASETTASWE) are disordered. A compositionally biased stretch (basic and acidic residues) spans 62-71 (MPDKQDEHHH). Polar residues predominate over residues 73–84 (QSTTPASETTAS). Residues 130–133 (WMND), Q149, and W157 contribute to the substrate site. D133 is a catalytic residue. A glycan (N-linked (GlcNAc...) asparagine) is linked at N159. Substrate is bound at residue 192-193 (WS). Residue N226 is glycosylated (N-linked (GlcNAc...) asparagine). Substrate is bound by residues 256 to 257 (RD), E311, and D344. An intrachain disulfide couples C499 to C545.

Belongs to the glycosyl hydrolase 32 family. Monomer. May be present in two forms, a 70 kDa monomer and a heterodimer of the 30 kDa and 38 kDa subunits. The ratio of the levels of the two forms within cells appears to be regulated developmentally. Post-translationally, glycosylated. Expressed in buds, stems, roots and leaves. Expressed in the epidermal cells of young leaves and of primordial leaves.

It is found in the membrane. It localises to the vacuole lumen. The enzyme catalyses Hydrolysis of terminal non-reducing beta-D-fructofuranoside residues in beta-D-fructofuranosides.. In terms of biological role, acidic vacuolar invertase involved in light-induced bud burst. This is Acid beta-fructofuranosidase 1, vacuolar from Rosa hybrid cultivar.